We begin with the raw amino-acid sequence, 586 residues long: Asparagine synthetase [glutamine-hydrolyzing] (586 aa).

Catalysis depends on Cys-2, which acts as the For GATase activity. In terms of domain architecture, Glutamine amidotransferase type-2 spans 2-185; sequence CGILAVLGCS…PGHLYSSKSG (184 aa). L-glutamine contacts are provided by residues 50–54, 75–77, and Asp-98; these read RLAII and NGE. The Asparagine synthetase domain maps to 194-517; the sequence is PPWFNESVPS…PQNSARLTVP (324 aa). Residues Leu-232, Val-268, and 342 to 343 each bind ATP; that span reads SG.

It belongs to the asparagine synthetase family.

The enzyme catalyses L-aspartate + L-glutamine + ATP + H2O = L-asparagine + L-glutamate + AMP + diphosphate + H(+). Its pathway is amino-acid biosynthesis; L-asparagine biosynthesis; L-asparagine from L-aspartate (L-Gln route): step 1/1. This is Asparagine synthetase [glutamine-hydrolyzing] from Brassica oleracea (Wild cabbage).